Consider the following 126-residue polypeptide: LWamide neuropeptides (126 aa).

Positions 1-2 are cleaved as a propeptide — 1; that stretch reads KR. The segment at 1–126 is disordered; sequence KRQQPGLWGR…KSAIPKAKPQ (126 aa). A Tryptophan amide modification is found at Trp8. Residues 11-15 constitute a propeptide, 2; that stretch reads SADPQ. Trp20 and Trp29 each carry tryptophan amide. Residues 32-36 constitute a propeptide, 2; the sequence is SADPQ. Trp41 and Trp50 each carry tryptophan amide. Residues 53–57 constitute a propeptide, 2; the sequence is SADPQ. Tryptophan amide occurs at positions 62 and 71. The propeptide at 74-78 is 2; that stretch reads SADPQ. At Trp83 the chain carries Tryptophan amide. Positions 86–93 are cleaved as a propeptide — 3; sequence SAGSGKRQ. At Trp99 the chain carries Tryptophan amide. Positions 102–126 are cleaved as a propeptide — 4; sequence SAEPPQYKELEDLKQKSAIPKAKPQ. Positions 107 to 116 are enriched in basic and acidic residues; the sequence is QYKELEDLKQ.

This sequence belongs to the LWamide neuropeptide family.

The protein localises to the secreted. Functionally, metamorphosin A may be part of an internal signaling system involved in control of metamorphosis. The protein is LWamide neuropeptides of Anemonia sulcata (Mediterranean snakelocks sea anemone).